A 362-amino-acid chain; its full sequence is DNA replication and repair protein RecF (362 aa).

30–37 is a binding site for ATP; it reads GLNAQGKS.

This sequence belongs to the RecF family.

The protein resides in the cytoplasm. Its function is as follows. The RecF protein is involved in DNA metabolism; it is required for DNA replication and normal SOS inducibility. RecF binds preferentially to single-stranded, linear DNA. It also seems to bind ATP. The protein is DNA replication and repair protein RecF of Thermoanaerobacter sp. (strain X514).